A 444-amino-acid polypeptide reads, in one-letter code: tRNA modification GTPase MnmE (444 aa).

Arg-24, Glu-81, and Lys-121 together coordinate (6S)-5-formyl-5,6,7,8-tetrahydrofolate. One can recognise a TrmE-type G domain in the interval 218–368 (GLTVVIAGPP…LLDALVGFAR (151 aa)). Residues 228 to 233 (NAGKST), 247 to 253 (SPQAGTT), 272 to 275 (DTAG), and 349 to 351 (SAR) each bind GTP. Positions 232 and 253 each coordinate Mg(2+). Lys-444 is a binding site for (6S)-5-formyl-5,6,7,8-tetrahydrofolate.

It belongs to the TRAFAC class TrmE-Era-EngA-EngB-Septin-like GTPase superfamily. TrmE GTPase family. Homodimer. Heterotetramer of two MnmE and two MnmG subunits. K(+) is required as a cofactor.

It localises to the cytoplasm. Its function is as follows. Exhibits a very high intrinsic GTPase hydrolysis rate. Involved in the addition of a carboxymethylaminomethyl (cmnm) group at the wobble position (U34) of certain tRNAs, forming tRNA-cmnm(5)s(2)U34. This chain is tRNA modification GTPase MnmE, found in Bradyrhizobium sp. (strain ORS 278).